The sequence spans 505 residues: Protein disulfide-isomerase (505 aa).

Residues 1-20 (MHKAQKFALGLLAAAAVATA) form the signal peptide. Thioredoxin domains are found at residues 21–128 (SDVV…QSLP) and 335–465 (FVAG…ENGK). Residues C50, C53, C385, and C388 each act as nucleophile in the active site. 2 disulfide bridges follow: C50–C53 and C385–C388. The tract at residues 470–505 (ISEDAEETSSATETTTETATKSEEAAKETATEHDEL) is disordered. Over residues 477-488 (TSSATETTTETA) the composition is skewed to low complexity. Over residues 489–505 (TKSEEAAKETATEHDEL) the composition is skewed to basic and acidic residues. A Prevents secretion from ER motif is present at residues 502–505 (HDEL).

The protein belongs to the protein disulfide isomerase family.

It localises to the endoplasmic reticulum lumen. It catalyses the reaction Catalyzes the rearrangement of -S-S- bonds in proteins.. In terms of biological role, participates in the folding of proteins containing disulfide bonds, may be involved in glycosylation, prolyl hydroxylation and triglyceride transfer. In Humicola insolens (Soft-rot fungus), this protein is Protein disulfide-isomerase.